The sequence spans 317 residues: Probable F-box protein At2g36090 (317 aa).

The F-box domain occupies 25–74 (IESHILTRLDGATLASVSCASSHLHHLASNEILWSKICRSTWPSCSGGSR).

This Arabidopsis thaliana (Mouse-ear cress) protein is Probable F-box protein At2g36090.